The sequence spans 207 residues: Outer-membrane lipoprotein LolB (207 aa).

The N-terminal stretch at 1-21 (MPMRKRHFYRLLPLASLLLAA) is a signal peptide. Cysteine 22 carries N-palmitoyl cysteine lipidation. The S-diacylglycerol cysteine moiety is linked to residue cysteine 22.

Belongs to the LolB family. In terms of assembly, monomer.

It is found in the cell outer membrane. Functionally, plays a critical role in the incorporation of lipoproteins in the outer membrane after they are released by the LolA protein. The chain is Outer-membrane lipoprotein LolB from Yersinia pseudotuberculosis serotype IB (strain PB1/+).